We begin with the raw amino-acid sequence, 527 residues long: Bifunctional purine biosynthesis protein PurH (527 aa).

Residues 9-156 (MARKPIRRAL…KNHPSVAVVT (148 aa)) enclose the MGS-like domain.

Belongs to the PurH family.

The enzyme catalyses (6R)-10-formyltetrahydrofolate + 5-amino-1-(5-phospho-beta-D-ribosyl)imidazole-4-carboxamide = 5-formamido-1-(5-phospho-D-ribosyl)imidazole-4-carboxamide + (6S)-5,6,7,8-tetrahydrofolate. It catalyses the reaction IMP + H2O = 5-formamido-1-(5-phospho-D-ribosyl)imidazole-4-carboxamide. Its pathway is purine metabolism; IMP biosynthesis via de novo pathway; 5-formamido-1-(5-phospho-D-ribosyl)imidazole-4-carboxamide from 5-amino-1-(5-phospho-D-ribosyl)imidazole-4-carboxamide (10-formyl THF route): step 1/1. The protein operates within purine metabolism; IMP biosynthesis via de novo pathway; IMP from 5-formamido-1-(5-phospho-D-ribosyl)imidazole-4-carboxamide: step 1/1. The protein is Bifunctional purine biosynthesis protein PurH of Mycobacterium leprae (strain Br4923).